The primary structure comprises 228 residues: Cytidylate kinase (228 aa).

Residue 11-19 coordinates ATP; sequence GPAGTGKSS.

This sequence belongs to the cytidylate kinase family. Type 1 subfamily.

The protein resides in the cytoplasm. It carries out the reaction CMP + ATP = CDP + ADP. It catalyses the reaction dCMP + ATP = dCDP + ADP. The chain is Cytidylate kinase from Mycobacterium avium (strain 104).